A 301-amino-acid polypeptide reads, in one-letter code: GTPase Era (301 aa).

Residues 7-175 enclose the Era-type G domain; it reads YCGFIAIVGR…AAIVRKHLPE (169 aa). Residues 15-22 form a G1 region; the sequence is GRPNVGKS. 15 to 22 provides a ligand contact to GTP; sequence GRPNVGKS. The G2 stretch occupies residues 41-45; it reads QTTRH. The G3 stretch occupies residues 62–65; the sequence is DTPG. Residues 62–66 and 124–127 contribute to the GTP site; these read DTPGL and NKVD. The G4 stretch occupies residues 124-127; the sequence is NKVD. A G5 region spans residues 154 to 156; it reads ISA. Residues 206–283 form the KH type-2 domain; it reads LGAELPYSVT…HLELWVKVKS (78 aa).

Belongs to the TRAFAC class TrmE-Era-EngA-EngB-Septin-like GTPase superfamily. Era GTPase family. As to quaternary structure, monomer.

The protein localises to the cytoplasm. It localises to the cell inner membrane. Its function is as follows. An essential GTPase that binds both GDP and GTP, with rapid nucleotide exchange. Plays a role in 16S rRNA processing and 30S ribosomal subunit biogenesis and possibly also in cell cycle regulation and energy metabolism. The polypeptide is GTPase Era (Cronobacter sakazakii (strain ATCC BAA-894) (Enterobacter sakazakii)).